A 320-amino-acid polypeptide reads, in one-letter code: ATP-dependent 6-phosphofructokinase (320 aa).

G12 contacts ATP. ADP-binding positions include 22 to 26 (RSVVR) and 55 to 60 (RYSVSD). ATP is bound by residues 73-74 (RF) and 103-106 (GDGS). D104 contacts Mg(2+). A substrate-binding site is contributed by 126 to 128 (TID). The active-site Proton acceptor is the D128. R155 contributes to the ADP binding site. Substrate contacts are provided by residues R163 and 170-172 (MGR). ADP-binding positions include 186-188 (GCE) and 214-216 (KKH). Residues E223, R244, and 250 to 253 (HIQR) each bind substrate.

This sequence belongs to the phosphofructokinase type A (PFKA) family. ATP-dependent PFK group I subfamily. Prokaryotic clade 'B1' sub-subfamily. In terms of assembly, homotetramer. Mg(2+) serves as cofactor.

It is found in the cytoplasm. It carries out the reaction beta-D-fructose 6-phosphate + ATP = beta-D-fructose 1,6-bisphosphate + ADP + H(+). Its pathway is carbohydrate degradation; glycolysis; D-glyceraldehyde 3-phosphate and glycerone phosphate from D-glucose: step 3/4. Allosterically activated by ADP and other diphosphonucleosides, and allosterically inhibited by phosphoenolpyruvate. In terms of biological role, catalyzes the phosphorylation of D-fructose 6-phosphate to fructose 1,6-bisphosphate by ATP, the first committing step of glycolysis. The polypeptide is ATP-dependent 6-phosphofructokinase (Baumannia cicadellinicola subsp. Homalodisca coagulata).